We begin with the raw amino-acid sequence, 286 residues long: Pantothenate synthetase (286 aa).

Position 30-37 (30-37 (MGNLHDGH)) interacts with ATP. Histidine 37 (proton donor) is an active-site residue. Residue glutamine 61 coordinates (R)-pantoate. Beta-alanine is bound at residue glutamine 61. ATP is bound at residue 149-152 (GEKD). Position 155 (glutamine 155) interacts with (R)-pantoate. ATP-binding positions include valine 178 and 186–189 (LSSR).

It belongs to the pantothenate synthetase family. In terms of assembly, homodimer.

It is found in the cytoplasm. The catalysed reaction is (R)-pantoate + beta-alanine + ATP = (R)-pantothenate + AMP + diphosphate + H(+). Its pathway is cofactor biosynthesis; (R)-pantothenate biosynthesis; (R)-pantothenate from (R)-pantoate and beta-alanine: step 1/1. Catalyzes the condensation of pantoate with beta-alanine in an ATP-dependent reaction via a pantoyl-adenylate intermediate. The polypeptide is Pantothenate synthetase (Edwardsiella ictaluri (strain 93-146)).